The chain runs to 779 residues: Pleckstrin homology domain-containing family A member 4 (779 aa).

Positions Pro-54–Arg-153 constitute a PH domain. Disordered regions lie at residues Ser-152 to Pro-355, Ala-495 to His-669, and Ser-694 to Gly-766. Ser-164 bears the Phosphoserine mark. Positions Val-183–Glu-193 are enriched in basic and acidic residues. 2 stretches are compositionally biased toward low complexity: residues Pro-246–Ser-259 and Gln-324–Thr-334. Positions Gln-517–Leu-527 are enriched in basic and acidic residues. Over residues Ser-528–Glu-540 the composition is skewed to low complexity. Ser-562 is modified (phosphoserine). Over residues Arg-567–Leu-580 the composition is skewed to polar residues. Composition is skewed to low complexity over residues Gly-608–Ser-627 and Ser-649–Ser-659. Positions Val-720–Gly-740 are enriched in polar residues.

The protein resides in the cytoplasm. It localises to the membrane. In terms of biological role, binds specifically to phosphatidylinositol 3-phosphate (PtdIns3P), but not to other phosphoinositides. This Rattus norvegicus (Rat) protein is Pleckstrin homology domain-containing family A member 4 (Plekha4).